The following is a 345-amino-acid chain: S-adenosylmethionine:tRNA ribosyltransferase-isomerase (345 aa).

This sequence belongs to the QueA family. In terms of assembly, monomer.

The protein localises to the cytoplasm. It catalyses the reaction 7-aminomethyl-7-carbaguanosine(34) in tRNA + S-adenosyl-L-methionine = epoxyqueuosine(34) in tRNA + adenine + L-methionine + 2 H(+). Its pathway is tRNA modification; tRNA-queuosine biosynthesis. In terms of biological role, transfers and isomerizes the ribose moiety from AdoMet to the 7-aminomethyl group of 7-deazaguanine (preQ1-tRNA) to give epoxyqueuosine (oQ-tRNA). This chain is S-adenosylmethionine:tRNA ribosyltransferase-isomerase, found in Aromatoleum aromaticum (strain DSM 19018 / LMG 30748 / EbN1) (Azoarcus sp. (strain EbN1)).